Consider the following 205-residue polypeptide: Transcription termination/antitermination protein NusG (205 aa).

In terms of domain architecture, KOW spans 154 to 178 (GDHIMVLSGPFKDFEGDVIEVSPER).

It belongs to the NusG family.

Its function is as follows. Participates in transcription elongation, termination and antitermination. This Synechocystis sp. (strain ATCC 27184 / PCC 6803 / Kazusa) protein is Transcription termination/antitermination protein NusG.